We begin with the raw amino-acid sequence, 379 residues long: NAD-dependent protein deacetylase sirtuin-2 (379 aa).

Basic and acidic residues predominate over residues 1–10; sequence MSEEVSKRVE. The interval 1-32 is disordered; that stretch reads MSEEVSKRVEEEADTPGLEGQSDDSSDEGDAS. The segment covering 21-32 has biased composition (acidic residues); it reads QSDDSSDEGDAS. Positions 55 to 335 constitute a Deacetylase sirtuin-type domain; the sequence is KVLDELTLDS…MTLAELLGWK (281 aa). NAD(+) contacts are provided by residues 83–87, 93–95, and 165–168; these read AGIST, DFR, and QNID. H185 serves as the catalytic Proton acceptor. Zn(2+) contacts are provided by C193, C198, C219, and C222. Residues 260-261, 284-286, and C321 each bind NAD(+); these read TS and NME. Residues 349 to 361 are compositionally biased toward basic and acidic residues; that stretch reads IDSKDAKKTDKEA. Residues 349–379 form a disordered region; the sequence is IDSKDAKKTDKEASQSSKSAVAEAEKTDKTE.

This sequence belongs to the sirtuin family. Class I subfamily. The cofactor is Zn(2+).

Its subcellular location is the cytoplasm. It is found in the nucleus. The enzyme catalyses N(6)-acetyl-L-lysyl-[protein] + NAD(+) + H2O = 2''-O-acetyl-ADP-D-ribose + nicotinamide + L-lysyl-[protein]. It catalyses the reaction N(6)-tetradecanoyl-L-lysyl-[protein] + NAD(+) + H2O = 2''-O-tetradecanoyl-ADP-D-ribose + nicotinamide + L-lysyl-[protein]. The catalysed reaction is N(6)-hexadecanoyl-L-lysyl-[protein] + NAD(+) + H2O = 2''-O-hexadecanoyl-ADP-D-ribose + nicotinamide + L-lysyl-[protein]. Functionally, NAD-dependent protein deacetylase, which deacetylates internal lysines on histone and alpha-tubulin as well as many other proteins such as key transcription factors. Participates in the modulation of multiple and diverse biological processes such as cell cycle control, genomic integrity, microtubule dynamics, cell differentiation, metabolic networks, and autophagy. Plays a major role in the control of cell cycle progression and genomic stability. Deacetylates histone H4 at 'Lys-16' (H4K16ac) at the VEGFA promoter. Thereby contributes to regulate expression of vegfa, a key regulator of angiogenesis. In addition to protein deacetylase activity, also has activity toward long-chain fatty acyl groups and mediates protein-lysine demyristoylation and depalmitoylation of target proteins. This Danio rerio (Zebrafish) protein is NAD-dependent protein deacetylase sirtuin-2 (sirt2).